The primary structure comprises 646 residues: Long-chain fatty acid transport protein 1 (646 aa).

Residues 1-13 (MRAPGAGTASVAS) lie on the Extracellular side of the membrane. A helical membrane pass occupies residues 14 to 34 (LALLWFLGLPWTWSAAAAFCV). At 35–646 (YVGGGGWRFL…ARICAGDFSL (612 aa)) the chain is on the cytoplasmic side. The segment at 191 to 475 (EVSEQLGKSL…YVSDSATNKK (285 aa)) is sufficient for oligomerization. Residue 246–257 (YIYTSGTTGLPK) coordinates AMP.

It belongs to the ATP-dependent AMP-binding enzyme family. Self-associates. May function as a homodimer. Interacts with EPRS1; mediates the translocation of SLC27A1 from the cytoplasm to the plasma membrane thereby increasing the uptake of long-chain fatty acids. Interacts with DGAT2 and this interaction is enhanced in the presence of ZFYVE1. As to expression, higher expression in white adipose tissue than in heart. Highest expression in skeletal muscle, heart and fat. Lower levels in brain, kidney, lung, liver and testis. No expression in spleen or intestine.

It is found in the cell membrane. The protein resides in the mitochondrion outer membrane. Its subcellular location is the endomembrane system. The protein localises to the cytoplasm. The enzyme catalyses a fatty acid(in) = a fatty acid(out). The catalysed reaction is (9Z)-octadecenoate(out) = (9Z)-octadecenoate(in). It catalyses the reaction hexadecanoate(out) = hexadecanoate(in). It carries out the reaction (5Z,8Z,11Z,14Z)-eicosatetraenoate(out) = (5Z,8Z,11Z,14Z)-eicosatetraenoate(in). The enzyme catalyses (9Z,12Z)-octadecadienoate(out) = (9Z,12Z)-octadecadienoate(in). The catalysed reaction is a long-chain fatty acid + ATP + CoA = a long-chain fatty acyl-CoA + AMP + diphosphate. It catalyses the reaction (5Z,8Z,11Z,14Z)-eicosatetraenoate + ATP + CoA = (5Z,8Z,11Z,14Z)-eicosatetraenoyl-CoA + AMP + diphosphate. It carries out the reaction a very long-chain fatty acid + ATP + CoA = a very long-chain fatty acyl-CoA + AMP + diphosphate. The enzyme catalyses tetracosanoate + ATP + CoA = tetracosanoyl-CoA + AMP + diphosphate. Inhibited by Triacsin C. Both insulin and muscle contraction stimulate translocation to the plasma membrane in muscle, increasing fatty acid transport activity. In terms of biological role, mediates the import of long-chain fatty acids (LCFA) into the cell by facilitating their transport at the plasma membrane. Also functions as an acyl-CoA ligase catalyzing the ATP-dependent formation of fatty acyl-CoA using LCFA and very-long-chain fatty acids (VLCFA) as substrates, which prevents fatty acid efflux from cells and might drive more fatty acid uptake. May act directly as a bona fide transporter, or alternatively, in a cytoplasmic or membrane-associated multimeric protein complex to trap and draw fatty acids towards accumulation. Plays a pivotal role in regulating available LCFA substrates from exogenous sources in tissues undergoing high levels of beta-oxidation or triglyceride synthesis. May be involved in regulation of cholesterol metabolism. Probably involved in fatty acid transport across the blood barrier. This is Long-chain fatty acid transport protein 1 from Mus musculus (Mouse).